The chain runs to 4652 residues: Low-density lipoprotein receptor-related protein 2 (4652 aa).

The signal sequence occupies residues 1 to 25 (MERWAAAAACTLLLAFAACLAPASG). Residues 26 to 4422 (RECLGNEFRC…SKGISPGTTV (4397 aa)) lie on the Extracellular side of the membrane. LDL-receptor class A domains lie at 27–63 (ECLGNEFRCSNGHCITESWRCDGTRDCLDGSDEIGCP), 66–104 (TCGSTQFHCENEDVCIPLYWVCDGEEDCSNGADEHQRCP), 108–144 (TCSSHHFTCTNGECIPVEYRCDHSTDCLDGTDEINCR), 142–181 (NCRYPVCQQQTCHNGACYNTSQRCDGEIDCRDASDELNCT), 183–219 (RCLRNEFQCGSGECIPRDYVCDHDPDCSDSSDEHSCS), 223–259 (PCKGNEFACSNGFCINQNWVCDGMADCLDNSDEDGCE), and 267–308 (ECYP…RVCD). Intrachain disulfides connect Cys28-Cys40, Cys35-Cys53, Cys47-Cys62, Cys67-Cys80, Cys74-Cys93, Cys87-Cys103, Cys109-Cys121, Cys116-Cys134, Cys128-Cys143, Cys143-Cys158, Cys153-Cys171, Cys165-Cys180, Cys184-Cys196, Cys191-Cys209, Cys203-Cys218, Cys224-Cys236, Cys231-Cys249, Cys243-Cys258, Cys268-Cys281, Cys275-Cys294, and Cys288-Cys307. Asn160 and Asn179 each carry an N-linked (GlcNAc...) asparagine glycan. Asn341 is a glycosylation site (N-linked (GlcNAc...) asparagine). Residues 348–386 (DFNDCQIWGICDHFCEDRIGHHQCFCAEGYVLEHEQHCR) enclose the EGF-like 1; calcium-binding domain. Disulfide bonds link Cys352/Cys362, Cys358/Cys371, and Cys373/Cys385. Residue Asn388 is glycosylated (N-linked (GlcNAc...) asparagine). LDL-receptor class B repeat units lie at residues 436-478 (SKVF…DWIN), 479-521 (NKLY…DPTV), 522-568 (GYLF…DLVA), 569-613 (KRVY…FEDN), 753-795 (NAIF…DWIS), 796-837 (RNLY…HPIA), 838-881 (GYIF…DWGS), and 882-925 (SRLY…FGEY). A glycan (N-linked (GlcNAc...) asparagine) is linked at Asn771. Residue Asn866 is glycosylated (N-linked (GlcNAc...) asparagine). Asn1015 carries N-linked (GlcNAc...) asparagine glycosylation. Positions 1025–1061 (QCGALSFPCNNGRCVPLHYRCDGVDDCHDNSDEVQCG) constitute an LDL-receptor class A 8 domain. Disulfide bonds link Cys1026–Cys1038, Cys1033–Cys1051, and Cys1045–Cys1060. Asn1064 carries an N-linked (GlcNAc...) asparagine glycan. LDL-receptor class A domains are found at residues 1066-1104 (SCAPSAFACGHGGGECIPSYWRCDNHNDCVDGSDEQNCS), 1110-1146 (SCRADYFTCDNHMCIPKNWLCDTDNDCGDGSDEKRCD), 1150-1186 (TCSPTQFHCPNHRCIDLAFVCDGDKDCADGSDESACV), 1188-1225 (NCTDSQFKCVGSNKCISNTYRCDGVSDCSDHSDEIDCP), 1231-1269 (MCRQDEFQCREDGICIPDSWECDGHPDCLTGSDEHSGCP), 1272-1308 (TCPXSRFLCANGNCIFRDWLCDGDNDCRDMSDEKDCP), and 1313-1351 (LCPSWQWQCPGHSICVNLSSVCDGISDCPHGTDESPLCN). Cystine bridges form between Cys1067/Cys1081, Cys1074/Cys1094, Cys1088/Cys1103, Cys1111/Cys1123, Cys1118/Cys1136, Cys1130/Cys1145, Cys1151/Cys1163, Cys1158/Cys1176, and Cys1170/Cys1185. Asn1102 is a glycosylation site (N-linked (GlcNAc...) asparagine). Trp1128, Asp1131, Asp1133, Asp1135, Asp1141, and Glu1142 together coordinate Ca(2+). Asn1188 carries N-linked (GlcNAc...) asparagine glycosylation. 12 cysteine pairs are disulfide-bonded: Cys1189-Cys1202, Cys1196-Cys1215, Cys1209-Cys1224, Cys1232-Cys1245, Cys1239-Cys1258, Cys1252-Cys1268, Cys1273-Cys1285, Cys1280-Cys1298, Cys1292-Cys1307, Cys1314-Cys1327, Cys1321-Cys1340, and Cys1334-Cys1350. Ca(2+)-binding residues include Tyr1207, Asp1210, Val1212, Asp1214, Asp1220, and Glu1221. An N-linked (GlcNAc...) asparagine glycan is attached at Asn1329. N-linked (GlcNAc...) asparagine glycosylation is found at Asn1385, Asn1452, Asn1498, and Asn1552. LDL-receptor class B repeat units follow at residues 1480–1522 (GRIF…DWVG), 1523–1565 (RNLY…DPRV), 1568–1611 (RVIF…DYPT), 1612–1654 (RLLY…TIFE), 1655–1696 (DSIY…VHPA), 1789–1831 (QFLY…DWLS), 1832–1881 (RNLY…DPAK), 1882–1929 (GKLY…DIQE), 1930–1971 (QKLY…YGPY), and 1972–2012 (LYYA…YRRR). N-linked (GlcNAc...) asparagine glycans are attached at residues Asn1677 and Asn1809. An N-linked (GlcNAc...) asparagine glycan is attached at Asn2053. 9 LDL-receptor class B repeats span residues 2105–2154 (GFVY…DWVA), 2155–2199 (GNLY…DPKN), 2200–2243 (RYLF…DHNS), 2244–2287 (GYIY…FGNS), 2429–2475 (NRIY…DWIG), 2476–2516 (RRIY…DPCQ), 2517–2560 (GYMY…DYKE), 2561–2602 (NLLY…YGQY), and 2603–2644 (IYWT…VVNN). Asn2175 and Asn2222 each carry an N-linked (GlcNAc...) asparagine glycan. The N-linked (GlcNAc...) asparagine glycan is linked to Asn2485. 10 consecutive LDL-receptor class A domains span residues 2696 to 2734 (RCNSTQFTCLSGYCILESLKCNDIDECGDSSDELETLCA), 2737 to 2773 (TCPPTSFTCANGRCIQRHFRCDHYNDCGDNSDESGCR), 2776 to 2815 (SCNITTEFSCNNGKCLPLQLVCDGIDHCNDNNTSDEKNCA), 2818 to 2857 (TCLPDYIKCANSNVCIPRLFLCDGDNDCGDMSDENPIYCV), 2860 to 2897 (TCKNNEFQCTSGSCIPELWHCDGERDCDDGSDEPATCV), 2902 to 2941 (TCSSDEFKCDNNRCIQMEWICDGDNDCGDMSDEDGRHHCE), 2944 to 2986 (NCSS…QNCT), 2989 to 3025 (NCSGTEFRCSNGLCIPNWFRCDRRNDCGDYSDERNCK), 3028 to 3066 (ACDENLFTCQNGICTYKSYICDGENDCGDNSDELEHLCH), and 3071 to 3107 (TCPPHQFRCNNGNCIEMVKVCNHQADCSDNSDEERCG). 18 disulfide bridges follow: Cys2697/Cys2709, Cys2704/Cys2722, Cys2716/Cys2733, Cys2738/Cys2750, Cys2745/Cys2763, Cys2757/Cys2772, Cys2777/Cys2790, Cys2785/Cys2803, Cys2797/Cys2814, Cys2819/Cys2832, Cys2826/Cys2845, Cys2839/Cys2856, Cys2861/Cys2873, Cys2868/Cys2886, Cys2880/Cys2896, Cys2903/Cys2915, Cys2910/Cys2928, and Cys2922/Cys2940. N-linked (GlcNAc...) asparagine glycosylation is present at Asn2698. N-linked (GlcNAc...) asparagine glycosylation occurs at Asn2778. Asn2806 and Asn2807 each carry an N-linked (GlcNAc...) asparagine glycan. Residue Asn2944 is glycosylated (N-linked (GlcNAc...) asparagine). 3 disulfides stabilise this stretch: Cys2945–Cys2962, Cys2952–Cys2975, and Cys2969–Cys2985. N-linked (GlcNAc...) asparagine glycosylation is found at Asn2984 and Asn2989. 9 cysteine pairs are disulfide-bonded: Cys2990–Cys3002, Cys2997–Cys3015, Cys3009–Cys3024, Cys3029–Cys3041, Cys3036–Cys3054, Cys3048–Cys3065, Cys3072–Cys3084, Cys3079–Cys3097, and Cys3091–Cys3106. Asn3122 carries N-linked (GlcNAc...) asparagine glycosylation. In terms of domain architecture, EGF-like 2; calcium-binding spans 3149 to 3189 (DIDECKETPSVCSQKCENLLGSYICKCAPGYTREPDGRSCR). 3 disulfides stabilise this stretch: Cys3153–Cys3164, Cys3160–Cys3173, and Cys3175–Cys3188. N-linked (GlcNAc...) asparagine glycans are attached at residues Asn3208, Asn3254, Asn3312, and Asn3352. 5 LDL-receptor class B repeats span residues 3236 to 3278 (ERLY…DWVT), 3279 to 3321 (RKLY…DKPR), 3330 to 3373 (GYVY…DYTN), 3374 to 3417 (DLLY…FEDT), and 3418 to 3458 (IYWT…YHPY). Residues Asn3435 and Asn3444 are each glycosylated (N-linked (GlcNAc...) asparagine). LDL-receptor class A domains follow at residues 3509-3547 (MCSSTQFLCANNEMCIPIWWKCDGQKDCLDGSDEPNTCP), 3550-3588 (FCRLGQFQCSDGNCTSSNFICNARQDCPDGSDEDAVLCE), 3591-3629 (RCESNQWQCANKRCIPESWQCDSLNDCGDNSDEDSSHCA), 3632-3670 (TCLPGYFKCANGHCIPQSWKCDVDNDCGDYSDEPLQECM), 3675-3713 (RCDNYTEFDCKTNYRCIPKWAVCNGFDDCRDNSDEQNCE), 3716-3753 (TCKPSGEFRCTNHHCIPLRWRCDGHNDCGDNSDEENCV), 3756-3792 (QCSESEFRCDDQTCIPSRWICDQNNDCGDNSDERDCE), 3795-3831 (TCHPGYFQCSSGHCIPDQMRCDGFADCLDASDEATCP), and 3839-3877 (YCPATLFECKNHVCVQPSWKCDGDNDCGDGSDEELHLCL). 27 cysteine pairs are disulfide-bonded: Cys3510/Cys3523, Cys3517/Cys3536, Cys3530/Cys3546, Cys3551/Cys3563, Cys3558/Cys3576, Cys3570/Cys3587, Cys3592/Cys3604, Cys3599/Cys3617, Cys3611/Cys3628, Cys3633/Cys3645, Cys3640/Cys3658, Cys3652/Cys3669, Cys3676/Cys3690, Cys3684/Cys3703, Cys3697/Cys3712, Cys3717/Cys3730, Cys3725/Cys3743, Cys3737/Cys3752, Cys3757/Cys3769, Cys3764/Cys3782, Cys3776/Cys3791, Cys3796/Cys3808, Cys3803/Cys3821, Cys3815/Cys3830, Cys3840/Cys3852, Cys3847/Cys3865, and Cys3859/Cys3876. N-linked (GlcNAc...) asparagine glycosylation is present at Asn3562. A glycan (N-linked (GlcNAc...) asparagine) is linked at Asn3678. N-linked (GlcNAc...) asparagine glycosylation occurs at Asn3878. LDL-receptor class A domains are found at residues 3880-3919 (TCDLTNRFRCDNNRCIYRHELCNHEDDCGDGSDEKKENCL) and 3925-3961 (PCTEGEFKCSNGHCISQHLVCDDVDDCGDHFDETGCN). Disulfide bonds link Cys3881–Cys3894, Cys3889–Cys3907, Cys3901–Cys3918, Cys3926–Cys3938, Cys3933–Cys3951, Cys3945–Cys3960, Cys3968–Cys3977, Cys3973–Cys3987, Cys3989–Cys4003, Cys4009–Cys4019, Cys4015–Cys4028, and Cys4030–Cys4045. The EGF-like 3 domain maps to 3964 to 4004 (EERSCAENLCEHNCTQLIGGGFICSCRPGFKASSLNRNSCE). Residue Asn3976 is glycosylated (N-linked (GlcNAc...) asparagine). Positions 4005–4046 (DINECEQFGVCPQNCHNTKGSYECTCAEGFRSMSEHYGERCA) constitute an EGF-like 4; calcium-binding domain. A glycan (N-linked (GlcNAc...) asparagine) is linked at Asn4066. LDL-receptor class B repeat units lie at residues 4152–4194 (RHIY…NPKQ), 4195–4238 (GLMY…DYVN), and 4240–4281 (DRIY…FESQ). The N-linked (GlcNAc...) asparagine glycan is linked to Asn4325. The EGF-like 5 domain maps to 4375 to 4409 (MPPPCRCMNEGNCYFDKNNLPKCKCPSGYMGEYCE). Intrachain disulfides connect Cys4379/Cys4387, Cys4381/Cys4397, and Cys4399/Cys4408. The helical transmembrane segment at 4423–4443 (AVLVTLILIIIIGGLVALGFF) threads the bilayer. The Cytoplasmic portion of the chain corresponds to 4444–4652 (HYRKTGSILI…ANLVREDSEA (209 aa)). The SH3-binding signature appears at 4450–4459 (SILISMPRLP). Residues 4453–4458 (ISMPRL) carry the PxLPxI/L motif 1; mediates interaction with ANKRA2 motif. The PxLPxI/L motif 2; mediates interaction with ANKRA2 signature appears at 4456–4461 (PRLPSL). At Ser4460 the chain carries Phosphoserine. The short motif at 4518 to 4523 (FENPMY) is the Endocytosis signal element. Positions 4536 to 4553 (TTTQVSESGNVYNKNYGS) are enriched in polar residues. Residues 4536–4652 (TTTQVSESGN…ANLVREDSEA (117 aa)) are disordered. Ser4568 is subject to Phosphoserine. The interaction with DAB2 stretch occupies residues 4588 to 4601 (QNTNFENPIYAETE). An NPXY motif motif is present at residues 4594–4597 (NPIY). The SH2-binding signature appears at 4597–4600 (YAET). Residues 4610 to 4621 (VTPPPSPSPPAK) carry the SH3-binding motif. Residue Ser4615 is modified to Phosphoserine. A compositionally biased stretch (polar residues) spans 4626 to 4636 (KGTTPAYSATE). Thr4629 carries the post-translational modification Phosphothreonine. Residue Ser4650 is modified to Phosphoserine.

The protein belongs to the LDLR family. In terms of assembly, binds plasminogen, extracellular matrix components, plasminogen activator-plasminogen activator inhibitor type I complex, apolipoprotein E-enriched beta-VLDL, lipoprotein lipase, lactoferrin, CLU/clusterin and calcium. Forms a multimeric complex together with LRPAP1. Interacts (via PxLPxI/L motif) with ANKRA2 (via ankyrin repeats). Interacts with LRP2BP. Interacts (via NPXY motif) with DAB2; the interaction is not affected by tyrosine phosphorylation of the NPXY motif. Interacts with MB. Interacts with BMP4. Interacts with the Sonic hedgehog protein N-product which is the active product of SHH. Interacts with CST3 in a calcium-dependent manner. Interacts with the vitamin-D binding protein GC/DBP. Interacts with sex hormone-binding protein SHBG. Interacts with angiotensin-2. Also interacts with angiotensin 1-7. Interacts with APOM. Interacts with selenoprotein SEPP1. Interacts with LEP. Interacts with ALB. Interacts with the antiapoptotic protein BIRC5/survivin. Interacts with matrix metalloproteinase MMP2 in complex with metalloproteinase inhibitor TIMP1. In neurons, forms a trimeric complex with APP and APPB1/FE65. Interacts with LDLRAP1/ARH; mediates trafficking of LRP2 to the endocytic recycling compartment. Does not interact with beta-amyloid protein 40 alone but interacts with the complex composed of beta-amyloid protein 40 and CLU/APOJ. Interacts with MDK. In terms of processing, a fraction undergoes proteolytic cleavage of the extracellular domain at the cell membrane to generate a cytoplasmic tail fragment. This is internalized into the early endosome from where it trafficks in an LDLRAP1/ARH-dependent manner to the endocytic recycling compartment (ERC). In the ERC, it is further cleaved by gamma-secretase to release a fragment which translocates to the nucleus and mediates transcriptional repression. N-glycosylation is required for ligand binding.

It localises to the apical cell membrane. It is found in the endosome lumen. The protein resides in the membrane. Its subcellular location is the clathrin-coated pit. The protein localises to the cell projection. It localises to the dendrite. It is found in the axon. Functionally, multiligand endocytic receptor. Acts together with CUBN to mediate endocytosis of high-density lipoproteins. Mediates receptor-mediated uptake of polybasic drugs such as aprotinin, aminoglycosides and polymyxin B. In the kidney, mediates the tubular uptake and clearance of leptin. Also mediates transport of leptin across the blood-brain barrier through endocytosis at the choroid plexus epithelium. Endocytosis of leptin in neuronal cells is required for hypothalamic leptin signaling and leptin-mediated regulation of feeding and body weight. Mediates endocytosis and subsequent lysosomal degradation of CST3 in kidney proximal tubule cells. Mediates renal uptake of 25-hydroxyvitamin D3 in complex with the vitamin D3 transporter GC/DBP. Mediates renal uptake of metallothionein-bound heavy metals. Together with CUBN, mediates renal reabsorption of myoglobin. Mediates renal uptake and subsequent lysosomal degradation of APOM. Plays a role in kidney selenium homeostasis by mediating renal endocytosis of selenoprotein SEPP1. Mediates renal uptake of the antiapoptotic protein BIRC5/survivin which may be important for functional integrity of the kidney. Mediates renal uptake of matrix metalloproteinase MMP2 in complex with metalloproteinase inhibitor TIMP1. Mediates endocytosis of Sonic hedgehog protein N-product (ShhN), the active product of SHH. Also mediates ShhN transcytosis. In the embryonic neuroepithelium, mediates endocytic uptake and degradation of BMP4, is required for correct SHH localization in the ventral neural tube and plays a role in patterning of the ventral telencephalon. Required at the onset of neurulation to sequester SHH on the apical surface of neuroepithelial cells of the rostral diencephalon ventral midline and to control PTCH1-dependent uptake and intracellular trafficking of SHH. During neurulation, required in neuroepithelial cells for uptake of folate bound to the folate receptor FOLR1 which is necessary for neural tube closure. In the adult brain, negatively regulates BMP signaling in the subependymal zone which enables neurogenesis to proceed. In astrocytes, mediates endocytosis of ALB which is required for the synthesis of the neurotrophic factor oleic acid. Involved in neurite branching. During optic nerve development, required for SHH-mediated migration and proliferation of oligodendrocyte precursor cells. Mediates endocytic uptake and clearance of SHH in the retinal margin which protects retinal progenitor cells from mitogenic stimuli and keeps them quiescent. Plays a role in reproductive organ development by mediating uptake in reproductive tissues of androgen and estrogen bound to the sex hormone binding protein SHBG. Mediates endocytosis of angiotensin-2. Also mediates endocytosis of angiotensis 1-7. Binds to the complex composed of beta-amyloid protein 40 and CLU/APOJ and mediates its endocytosis and lysosomal degradation. Required for embryonic heart development. Required for normal hearing, possibly through interaction with estrogen in the inner ear. The sequence is that of Low-density lipoprotein receptor-related protein 2 from Sus scrofa (Pig).